The following is a 613-amino-acid chain: UvrABC system protein C (613 aa).

The GIY-YIG domain occupies 12 to 89 (DHPGVYIMHD…IKQHRPRYNV (78 aa)). In terms of domain architecture, UVR spans 199-234 (TALVKELKEQMEAAAARLEFEKAARLRDQLRAVQEV).

The protein belongs to the UvrC family. In terms of assembly, interacts with UvrB in an incision complex.

The protein localises to the cytoplasm. Functionally, the UvrABC repair system catalyzes the recognition and processing of DNA lesions. UvrC both incises the 5' and 3' sides of the lesion. The N-terminal half is responsible for the 3' incision and the C-terminal half is responsible for the 5' incision. The chain is UvrABC system protein C from Moorella thermoacetica (strain ATCC 39073 / JCM 9320).